The following is a 213-amino-acid chain: ATP phosphoribosyltransferase (213 aa).

Belongs to the ATP phosphoribosyltransferase family. Short subfamily. In terms of assembly, heteromultimer composed of HisG and HisZ subunits.

It is found in the cytoplasm. The catalysed reaction is 1-(5-phospho-beta-D-ribosyl)-ATP + diphosphate = 5-phospho-alpha-D-ribose 1-diphosphate + ATP. The protein operates within amino-acid biosynthesis; L-histidine biosynthesis; L-histidine from 5-phospho-alpha-D-ribose 1-diphosphate: step 1/9. In terms of biological role, catalyzes the condensation of ATP and 5-phosphoribose 1-diphosphate to form N'-(5'-phosphoribosyl)-ATP (PR-ATP). Has a crucial role in the pathway because the rate of histidine biosynthesis seems to be controlled primarily by regulation of HisG enzymatic activity. This chain is ATP phosphoribosyltransferase, found in Crocosphaera subtropica (strain ATCC 51142 / BH68) (Cyanothece sp. (strain ATCC 51142)).